An 86-amino-acid polypeptide reads, in one-letter code: Mitochondrial import inner membrane translocase subunit Tim10 (86 aa).

The Twin CX3C motif motif lies at 29–54; it reads CQAKCIATAFKESELTKGEAVCLDRC. 2 cysteine pairs are disulfide-bonded: cysteine 29-cysteine 54 and cysteine 33-cysteine 50.

It belongs to the small Tim family. As to quaternary structure, heterohexamer; composed of 3 copies of tim-9/tin-9.1 and 3 copies of tim-10/tin-10, named soluble 70 kDa complex. The complex associates with the tim-22 component of the TIM22 complex. Interacts with multi-pass transmembrane proteins in transit.

The protein localises to the mitochondrion inner membrane. In terms of biological role, mitochondrial intermembrane chaperone that participates in the import and insertion of multi-pass transmembrane proteins into the mitochondrial inner membrane. May also be required for the transfer of beta-barrel precursors from the TOM complex to the sorting and assembly machinery (SAM complex) of the outer membrane. Acts as a chaperone-like protein that protects the hydrophobic precursors from aggregation and guide them through the mitochondrial intermembrane space. This chain is Mitochondrial import inner membrane translocase subunit Tim10 (tin-10), found in Caenorhabditis briggsae.